The following is a 299-amino-acid chain: UBX domain-containing protein 1 (299 aa).

3 disordered regions span residues 39 to 61 (AGVP…SGAP), 127 to 176 (KAKL…NEDE), and 191 to 218 (EARK…APPK). The segment covering 46 to 61 (DAPAQAAPGAADSGAP) has biased composition (low complexity). A coiled-coil region spans residues 111–179 (AKVLEIREKI…REKNEDEIAR (69 aa)). The segment covering 128–176 (AKLEAEENREKEKKRREDGKAMISHKEAARDREIREAAQDRRREKNEDE) has biased composition (basic and acidic residues). The span at 201–213 (PVPEAKPAPSAAP) shows a compositional bias: low complexity. In terms of domain architecture, UBX spans 218–295 (KDYSTTTLQF…NLVPSANVIL (78 aa)).

In terms of assembly, interacts with cdc-48.1 (via N-terminus) and cdc-48.2 (via N-terminus) in vitro; the interaction with cdc-48.1 is not detected in vivo. In terms of tissue distribution, expressed in the germline (at protein level). Expressed in spermatocytes but not in mature sperm (at protein level). Ubiquitously expressed. Predominantly expressed in the spermatheca.

The protein resides in the cytoplasm. It is found in the perinuclear region. Ubiquitin-binding protein which acts as an adapter for ATPase cdc-48.1 and/or cdc-48.2, conferring substrate specificity. Together with ubxn-2 and ubxn-3, plays a role in hermaphrodite spermatogenesis probably by promoting the degradation of sex determination terminal factor tra-1. This Caenorhabditis elegans protein is UBX domain-containing protein 1.